A 378-amino-acid polypeptide reads, in one-letter code: Putative odorant receptor 71a (378 aa).

At 1–37 (MDYDRIRPVRFLTGVLKWWRLWPRKESVSTPDWTNWQ) the chain is on the cytoplasmic side. A helical membrane pass occupies residues 38 to 58 (AYALHVPFTFLFVLLLWLEAI). The Extracellular segment spans residues 59–66 (KSRDIQHT). A helical membrane pass occupies residues 67–87 (ADVLLICLTTTALGGKVINIW). Residues 88-127 (KYAHVAQGILSEWSTWDLFELRSKQEVDMWRFEHRRFNRV) are Cytoplasmic-facing. Residues 128–148 (FMFYCLCSAGVIPFIVIQPLF) form a helical membrane-spanning segment. The Extracellular segment spans residues 149–166 (DIPNRLPFWMWTPFDWQQ). A helical membrane pass occupies residues 167 to 187 (PVLFWYAFIYQATTIPIACAC). Topologically, residues 188–255 (NVTMDAVNWY…IFISKSTFTQ (68 aa)) are cytoplasmic. A helical transmembrane segment spans residues 256-276 (ILVSSLIICFTIYSMQMSPVL). At 277–280 (QDLP) the chain is on the extracellular side. Residues 281–301 (GFAAMMQYLVAMIMQVMLPTI) traverse the membrane as a helical segment. The Cytoplasmic portion of the chain corresponds to 302–343 (YGNAVIDSANMLTDSMYNSDWPDMNCRMRRLVLMFMVYLNRP). Residues 344-364 (VTLKAGGFFHIGLPLFTKTMN) form a helical membrane-spanning segment. The Extracellular segment spans residues 365–378 (QAYSLLALLLNMNQ).

This sequence belongs to the insect chemoreceptor superfamily. Heteromeric odorant receptor channel (TC 1.A.69) family. Or2a subfamily. As to quaternary structure, interacts with Orco. Complexes exist early in the endomembrane system in olfactory sensory neurons (OSNs), coupling these complexes to the conserved ciliary trafficking pathway. In terms of tissue distribution, expressed in olfactory sensory neurons in the maxillary palp.

The protein localises to the cell membrane. Functionally, odorant receptor which mediates acceptance or avoidance behavior, depending on its substrates. The odorant receptor repertoire encodes a large collection of odor stimuli that vary widely in identity, intensity, and duration. May form a complex with Orco to form odorant-sensing units, providing sensitive and prolonged odorant signaling and calcium permeability. The protein is Putative odorant receptor 71a (Or71a) of Drosophila melanogaster (Fruit fly).